The chain runs to 21 residues: Peptide PGLa-R4 (21 aa).

Position 21 is a leucine amide (L21).

As to expression, expressed by the skin glands.

It is found in the secreted. Antimicrobial peptide. This chain is Peptide PGLa-R4, found in Xenopus ruwenzoriensis (Uganda clawed frog).